The following is a 369-amino-acid chain: Phenylalanine--tRNA ligase alpha subunit (369 aa).

Glu-269 lines the Mg(2+) pocket.

The protein belongs to the class-II aminoacyl-tRNA synthetase family. Phe-tRNA synthetase alpha subunit type 1 subfamily. In terms of assembly, tetramer of two alpha and two beta subunits. It depends on Mg(2+) as a cofactor.

It is found in the cytoplasm. It carries out the reaction tRNA(Phe) + L-phenylalanine + ATP = L-phenylalanyl-tRNA(Phe) + AMP + diphosphate + H(+). The protein is Phenylalanine--tRNA ligase alpha subunit of Nitrobacter winogradskyi (strain ATCC 25391 / DSM 10237 / CIP 104748 / NCIMB 11846 / Nb-255).